Reading from the N-terminus, the 105-residue chain is Thioredoxin (105 aa).

Positions 1 to 105 constitute a Thioredoxin domain; that stretch reads MANNVTDSSF…SLLDWINKSI (105 aa). Cys-30 and Cys-33 are disulfide-bonded.

It belongs to the thioredoxin family.

In terms of biological role, component of the thioredoxin-thioredoxin reductase system. Participates in various redox reactions through the reversible oxidation of its active center dithiol to a disulfide and catalyzes dithiol-disulfide exchange reactions. The chain is Thioredoxin (trxA) from Rickettsia felis (strain ATCC VR-1525 / URRWXCal2) (Rickettsia azadi).